Consider the following 331-residue polypeptide: Glyceraldehyde-3-phosphate dehydrogenase (331 aa).

NAD(+) contacts are provided by residues 10-11 (RI), Asp-31, Lys-75, and Thr-117. Residues 148–150 (SCT) and Thr-179 contribute to the D-glyceraldehyde 3-phosphate site. Catalysis depends on Cys-149, which acts as the Nucleophile. Asn-180 contacts NAD(+). D-glyceraldehyde 3-phosphate is bound by residues Arg-194, 207–208 (TG), and Arg-230. Asn-311 lines the NAD(+) pocket.

Belongs to the glyceraldehyde-3-phosphate dehydrogenase family. As to quaternary structure, homotetramer.

It localises to the cytoplasm. The enzyme catalyses D-glyceraldehyde 3-phosphate + phosphate + NAD(+) = (2R)-3-phospho-glyceroyl phosphate + NADH + H(+). It participates in carbohydrate degradation; glycolysis; pyruvate from D-glyceraldehyde 3-phosphate: step 1/5. Functionally, catalyzes the oxidative phosphorylation of glyceraldehyde 3-phosphate (G3P) to 1,3-bisphosphoglycerate (BPG) using the cofactor NAD. The first reaction step involves the formation of a hemiacetal intermediate between G3P and a cysteine residue, and this hemiacetal intermediate is then oxidized to a thioester, with concomitant reduction of NAD to NADH. The reduced NADH is then exchanged with the second NAD, and the thioester is attacked by a nucleophilic inorganic phosphate to produce BPG. This is Glyceraldehyde-3-phosphate dehydrogenase (gap) from Thermus aquaticus.